Here is a 346-residue protein sequence, read N- to C-terminus: Dihydroorotase (346 aa).

2 residues coordinate Zn(2+): His-13 and His-15. Residues 15 to 17 (HLR) and Asn-41 each bind substrate. Zn(2+) contacts are provided by Lys-99, His-136, and His-174. Lys-99 bears the N6-carboxylysine mark. Substrate is bound at residue His-136. Leu-219 contacts substrate. Asp-247 contributes to the Zn(2+) binding site. Residue Asp-247 is part of the active site. Residues His-251 and Ala-263 each contribute to the substrate site.

It belongs to the metallo-dependent hydrolases superfamily. DHOase family. Class II DHOase subfamily. Homodimer. The cofactor is Zn(2+).

It catalyses the reaction (S)-dihydroorotate + H2O = N-carbamoyl-L-aspartate + H(+). It functions in the pathway pyrimidine metabolism; UMP biosynthesis via de novo pathway; (S)-dihydroorotate from bicarbonate: step 3/3. Its function is as follows. Catalyzes the reversible cyclization of carbamoyl aspartate to dihydroorotate. The polypeptide is Dihydroorotase (Rhizobium rhizogenes (strain K84 / ATCC BAA-868) (Agrobacterium radiobacter)).